We begin with the raw amino-acid sequence, 637 residues long: Protein arginine N-methyltransferase 5 (637 aa).

At A2 the chain carries N-acetylalanine; in Protein arginine N-methyltransferase 5, N-terminally processed. Residues 13–292 (RVSSGRDLNC…YLEYLSQNRP (280 aa)) form a TIM barrel region. The SAM-dependent MTase PRMT-type domain occupies 308–615 (LQSPLQPLMD…SNSKKVWYEW (308 aa)). Residue Y324 participates in S-adenosyl-L-methionine binding. F327 serves as a coordination point for a protein. S-adenosyl-L-methionine contacts are provided by residues 333 to 334 (KY), E392, and 419 to 420 (DM). A protein contacts are provided by E435 and E444. Residues E435 and E444 each act as proton donor/acceptor in the active site. Residues 465–637 (PGEYTSFLAP…PTGRSYTIGL (173 aa)) form a beta barrel region. A dimerization region spans residues 488-494 (REKDRDP).

This sequence belongs to the class I-like SAM-binding methyltransferase superfamily. Protein arginine N-methyltransferase family. As to quaternary structure, forms, at least, homodimers and homotetramers. Component of the methylosome complex, composed of PRMT5, WDR77 and CLNS1A. Found in a complex composed of PRMT5, WDR77 and RIOK1. RIOK1 and CLNS1A associate with PRMT5 in a mutually exclusive fashion, which allows the recruitment of distinct methylation substrates, such as nucleolin/NCL and Sm proteins, respectively. Interacts with PRDM1. Identified in a complex composed of methylosome and PRMT1 and ERH. Interacts with EGFR; methylates EGFR and stimulates EGFR-mediated ERK activation. Interacts with HOXA9. Interacts with SRGAP2. Found in a complex with COPRS, RUNX1 and CBFB. Interacts with CHTOP; the interaction symmetrically methylates CHTOP, but seems to require the presence of PRMT1. Interacts with EPB41L3; this modulates methylation of target proteins. Component of a high molecular weight E2F-pocket protein complex, CERC (cyclin E1 repressor complex). Associates with SWI/SNF remodeling complexes containing SMARCA2 and SMARCA4. Interacts with JAK2, SSTR1, SUPT5H, BRAF and with active RAF1. Interacts with LSM11, PRMT7 and SNRPD3. Interacts with COPRS; promoting its recruitment on histone H4. Interacts with CLNS1A/pICln. Identified in a complex with CLNS1A/pICln and Sm proteins. Interacts with RPS10. Interacts with WDR77. Interacts with IWS1. Interacts with CRY1. Interacts with POLR2A. Interacts with SMN1/SMN2. Interacts with LYAR; this interaction is direct. Interacts with TTC5/STRAP; this interaction is DNA damage-dependent and promotes PRMT5 interaction with p53/TP53. Interacts with p53/TP53 in response to DNA damage; the interaction is TTC5/STRAP dependent. Interacts with FAM47E; the interaction is direct, promotes PRMT5 localization to chromatin, and does not disrupt its association with WDR77 or STUB1. Interacts with TDRD6. Interacts with STUB1. Interacts with MBD2. Does not interact with MBD3. In terms of tissue distribution, ubiquitous.

The protein localises to the cytoplasm. The protein resides in the nucleus. Its subcellular location is the chromosome. It localises to the golgi apparatus. The enzyme catalyses L-arginyl-[protein] + 2 S-adenosyl-L-methionine = N(omega),N(omega)'-dimethyl-L-arginyl-[protein] + 2 S-adenosyl-L-homocysteine + 2 H(+). Activity is increased by EGF, HGF, FGF1 or FGF2 treatments, and slightly decreased by NGF treatment. Arginine methyltransferase that can both catalyze the formation of omega-N monomethylarginine (MMA) and symmetrical dimethylarginine (sDMA), with a preference for the formation of MMA. Specifically mediates the symmetrical dimethylation of arginine residues in the small nuclear ribonucleoproteins Sm D1 (SNRPD1) and Sm D3 (SNRPD3); such methylation being required for the assembly and biogenesis of snRNP core particles. Methylates SUPT5H and may regulate its transcriptional elongation properties. May methylate the N-terminal region of MBD2. Mono- and dimethylates arginine residues of myelin basic protein (MBP) in vitro. May play a role in cytokine-activated transduction pathways. Negatively regulates cyclin E1 promoter activity and cellular proliferation. Methylates histone H2A and H4 'Arg-3' during germ cell development. Methylates histone H3 'Arg-8', which may repress transcription. Methylates the Piwi proteins (PIWIL1, PIWIL2 and PIWIL4), methylation of Piwi proteins being required for the interaction with Tudor domain-containing proteins and subsequent localization to the meiotic nuage. Methylates RPS10. Attenuates EGF signaling through the MAPK1/MAPK3 pathway acting at 2 levels. First, monomethylates EGFR; this enhances EGFR 'Tyr-1197' phosphorylation and PTPN6 recruitment, eventually leading to reduced SOS1 phosphorylation. Second, methylates RAF1 and probably BRAF, hence destabilizing these 2 signaling proteins and reducing their catalytic activity. Required for induction of E-selectin and VCAM-1, on the endothelial cells surface at sites of inflammation. Methylates HOXA9. Methylates and regulates SRGAP2 which is involved in cell migration and differentiation. Acts as a transcriptional corepressor in CRY1-mediated repression of the core circadian component PER1 by regulating the H4R3 dimethylation at the PER1 promoter. Methylates GM130/GOLGA2, regulating Golgi ribbon formation. Methylates H4R3 in genes involved in glioblastomagenesis in a CHTOP- and/or TET1-dependent manner. Symmetrically methylates POLR2A, a modification that allows the recruitment to POLR2A of proteins including SMN1/SMN2 and SETX. This is required for resolving RNA-DNA hybrids created by RNA polymerase II, that form R-loop in transcription terminal regions, an important step in proper transcription termination. Along with LYAR, binds the promoter of gamma-globin HBG1/HBG2 and represses its expression. Symmetrically methylates NCL. Methylates p53/TP53; methylation might possibly affect p53/TP53 target gene specificity. Involved in spliceosome maturation and mRNA splicing in prophase I spermatocytes through the catalysis of the symmetrical arginine dimethylation of SNRPB (small nuclear ribonucleoprotein-associated protein) and the interaction with tudor domain-containing protein TDRD6. The sequence is that of Protein arginine N-methyltransferase 5 (PRMT5) from Homo sapiens (Human).